The following is a 181-amino-acid chain: UPF0177 protein YbdI (181 aa).

The next 5 membrane-spanning stretches (helical) occupy residues 10 to 30 (ILFL…GVFA), 41 to 61 (LLWL…AHYL), 81 to 101 (FVDS…IAPI), 114 to 134 (FFSH…LIHT), and 161 to 181 (SDSI…HIII).

This sequence belongs to the UPF0177 family.

The protein localises to the cell membrane. The sequence is that of UPF0177 protein YbdI (ybdI) from Lactococcus lactis subsp. lactis (strain IL1403) (Streptococcus lactis).